Consider the following 381-residue polypeptide: GDP-mannose transporter (381 aa).

The Cytoplasmic portion of the chain corresponds to 1–40 (MADDKKTNDYTVEMDKLDQGSKNFEAPLPPVQPRSAPNAQ). The chain crosses the membrane as a helical span at residues 41-61 (LANNPILPVLAYCGSSIMMTV). Topologically, residues 62 to 71 (MNKYVLSGTD) are lumenal. The helical transmembrane segment at 72 to 92 (FNLNFLLLCVQSIVCIVAIQT) threads the bilayer. At 93–110 (CKASKLITYRDFNADEAK) the chain is on the cytoplasmic side. The helical transmembrane segment at 111–127 (KWFPITLLLIGMIYTGS) threads the bilayer. Topologically, residues 128-134 (KALQFLS) are lumenal. The chain crosses the membrane as a helical span at residues 135–151 (IPVYTIFKNLTIILIAY). Residues 152-160 (GEVLWFGGS) lie on the Cytoplasmic side of the membrane. Residues 161–182 (VTGLTLFSFGLMVLSSIIAAWA) traverse the membrane as a helical segment. Topologically, residues 183-200 (DIKHAVESSGDATAKVST) are lumenal. The helical transmembrane segment at 201-221 (LNAGYIWMLINCLCTSSYVLG) threads the bilayer. Topologically, residues 222–233 (MRKRIKLTNFKD) are cytoplasmic. Residues 234–254 (FDTMFYNNLLSIPVLLVLTFL) traverse the membrane as a helical segment. At 255 to 274 (MEDWSSANITRNFPPADRNG) the chain is on the lumenal side. Asn-262 carries an N-linked (GlcNAc...) asparagine glycan. The chain crosses the membrane as a helical span at residues 275-295 (IMFAMILSGLSSVFISYTSAW). The Cytoplasmic segment spans residues 296–303 (CVRVTSST). Residues 304-324 (TYSMVGALNKLPIAVSGLIFF) form a helical membrane-spanning segment. At 325–327 (DAP) the chain is on the lumenal side. A helical transmembrane segment spans residues 328–348 (VTFPSVSAIVVGFVSGIVYAV). At 349–381 (AKIKQNAKPKTGVLPTSNPVSASSQSMRDSLRS) the chain is on the cytoplasmic side. Residues 362–381 (LPTSNPVSASSQSMRDSLRS) are disordered.

This sequence belongs to the TPT transporter family. SLC35D subfamily. Homooligomer.

The protein resides in the golgi apparatus membrane. Its subcellular location is the cytoplasmic vesicle membrane. It localises to the endoplasmic reticulum membrane. Functionally, involved in the import of GDP-mannose from the cytoplasm into the Golgi lumen. The polypeptide is GDP-mannose transporter (gmt1) (Aspergillus clavatus (strain ATCC 1007 / CBS 513.65 / DSM 816 / NCTC 3887 / NRRL 1 / QM 1276 / 107)).